Reading from the N-terminus, the 224-residue chain is F420-dependent NADP reductase (224 aa).

Residues 9 to 12, 31 to 32, K36, V74, V100, and A145 contribute to the NADP(+) site; these read TGDQ and SR.

The protein belongs to the F420-dependent NADP reductase family. In terms of assembly, homotetramer.

It carries out the reaction reduced coenzyme F420-(gamma-L-Glu)(n) + NADP(+) = oxidized coenzyme F420-(gamma-L-Glu)(n) + NADPH + 2 H(+). In terms of biological role, catalyzes the reduction of NADP(+) with F420H(2) via hydride transfer, and the reverse reaction, i.e. the reduction of F420 with NADPH. Probably functions in the regeneration of NADPH required in biosynthetic reactions. The protein is F420-dependent NADP reductase of Methanothermobacter marburgensis (strain ATCC BAA-927 / DSM 2133 / JCM 14651 / NBRC 100331 / OCM 82 / Marburg) (Methanobacterium thermoautotrophicum).